A 451-amino-acid chain; its full sequence is UDP-N-acetylmuramoylalanine--D-glutamate ligase (451 aa).

Residue 119–125 (GSNGKTT) coordinates ATP.

Belongs to the MurCDEF family.

It localises to the cytoplasm. The catalysed reaction is UDP-N-acetyl-alpha-D-muramoyl-L-alanine + D-glutamate + ATP = UDP-N-acetyl-alpha-D-muramoyl-L-alanyl-D-glutamate + ADP + phosphate + H(+). Its pathway is cell wall biogenesis; peptidoglycan biosynthesis. In terms of biological role, cell wall formation. Catalyzes the addition of glutamate to the nucleotide precursor UDP-N-acetylmuramoyl-L-alanine (UMA). This Streptococcus mutans serotype c (strain ATCC 700610 / UA159) protein is UDP-N-acetylmuramoylalanine--D-glutamate ligase.